The following is a 287-amino-acid chain: tRNA selenocysteine 1-associated protein 1 (287 aa).

2 RRM domains span residues 3–86 and 96–175; these read ASLW…YATY and YSLF…VAIP.

The protein belongs to the RRM TRSPAP family. Component of the tRNA(Sec) complex composed at least of EEFSEC, SECISBP2, SEPHS1, SEPSECS, TRNAU1AP and tRNA(Sec). Associates with mRNP and/or polysomes. Found in a complex with tRNA(Sec). Interacts with SEPSECS. In terms of tissue distribution, ubiquitous.

It localises to the nucleus. The protein localises to the cytoplasm. Involved in the early steps of selenocysteine biosynthesis and tRNA(Sec) charging to the later steps resulting in the cotranslational incorporation of selenocysteine into selenoproteins. Stabilizes the SECISBP2, EEFSEC and tRNA(Sec) complex. May be involved in the methylation of tRNA(Sec). Enhances efficiency of selenoproteins synthesis. The protein is tRNA selenocysteine 1-associated protein 1 (Trnau1ap) of Rattus norvegicus (Rat).